A 547-amino-acid polypeptide reads, in one-letter code: NXPE family member 1 (547 aa).

Residues 1–21 form the signal peptide; sequence MSSNTMLQKTLLILISFSVVT. N-linked (GlcNAc...) asparagine glycans are attached at residues N39 and N211.

The protein belongs to the NXPE family.

It is found in the secreted. The sequence is that of NXPE family member 1 (NXPE1) from Homo sapiens (Human).